The chain runs to 156 residues: Ribosomal RNA large subunit methyltransferase H (156 aa).

S-adenosyl-L-methionine is bound by residues leucine 73, glycine 104, and 123-128 (VSSLTL).

Belongs to the RNA methyltransferase RlmH family. Homodimer.

Its subcellular location is the cytoplasm. It catalyses the reaction pseudouridine(1915) in 23S rRNA + S-adenosyl-L-methionine = N(3)-methylpseudouridine(1915) in 23S rRNA + S-adenosyl-L-homocysteine + H(+). Specifically methylates the pseudouridine at position 1915 (m3Psi1915) in 23S rRNA. The polypeptide is Ribosomal RNA large subunit methyltransferase H (Paraburkholderia phymatum (strain DSM 17167 / CIP 108236 / LMG 21445 / STM815) (Burkholderia phymatum)).